Reading from the N-terminus, the 248-residue chain is Ubiquinone biosynthesis O-methyltransferase (248 aa).

Positions 41, 72, 93, and 136 each coordinate S-adenosyl-L-methionine.

This sequence belongs to the methyltransferase superfamily. UbiG/COQ3 family.

It catalyses the reaction a 3-demethylubiquinol + S-adenosyl-L-methionine = a ubiquinol + S-adenosyl-L-homocysteine + H(+). The catalysed reaction is a 3-(all-trans-polyprenyl)benzene-1,2-diol + S-adenosyl-L-methionine = a 2-methoxy-6-(all-trans-polyprenyl)phenol + S-adenosyl-L-homocysteine + H(+). The protein operates within cofactor biosynthesis; ubiquinone biosynthesis. In terms of biological role, O-methyltransferase that catalyzes the 2 O-methylation steps in the ubiquinone biosynthetic pathway. This Rhizobium etli (strain ATCC 51251 / DSM 11541 / JCM 21823 / NBRC 15573 / CFN 42) protein is Ubiquinone biosynthesis O-methyltransferase.